The following is a 201-amino-acid chain: Putative lipoprotein Hmuk_2215 (201 aa).

A signal peptide spans 1-22; sequence MCPRPRRAVLLGLGVAMSAIAG. Position 23 is an N-acetylcysteine (Cys23). A lipid anchor (S-archaeol cysteine) is attached at Cys23. Disordered stretches follow at residues 25–78 and 182–201; these read ETAP…ETSE and ATRA…GDCP. The span at 69–78 shows a compositional bias: basic and acidic residues; that stretch reads TRADETETSE.

The protein localises to the cell membrane. This is Putative lipoprotein Hmuk_2215 from Halomicrobium mukohataei (strain ATCC 700874 / DSM 12286 / JCM 9738 / NCIMB 13541) (Haloarcula mukohataei).